Here is a 95-residue protein sequence, read N- to C-terminus: Large ribosomal subunit protein uL23 (95 aa).

Belongs to the universal ribosomal protein uL23 family. As to quaternary structure, part of the 50S ribosomal subunit. Contacts protein L29, and trigger factor when it is bound to the ribosome.

In terms of biological role, one of the early assembly proteins it binds 23S rRNA. One of the proteins that surrounds the polypeptide exit tunnel on the outside of the ribosome. Forms the main docking site for trigger factor binding to the ribosome. This is Large ribosomal subunit protein uL23 from Bacillus subtilis (strain 168).